Consider the following 323-residue polypeptide: tRNA dimethylallyltransferase (323 aa).

12–19 (GPTAAGKT) contributes to the ATP binding site. Residue 14 to 19 (TAAGKT) coordinates substrate. 2 interaction with substrate tRNA regions span residues 37 to 40 (DSAL) and 161 to 165 (QRLIR).

This sequence belongs to the IPP transferase family. Monomer. Mg(2+) serves as cofactor.

It catalyses the reaction adenosine(37) in tRNA + dimethylallyl diphosphate = N(6)-dimethylallyladenosine(37) in tRNA + diphosphate. Functionally, catalyzes the transfer of a dimethylallyl group onto the adenine at position 37 in tRNAs that read codons beginning with uridine, leading to the formation of N6-(dimethylallyl)adenosine (i(6)A). The polypeptide is tRNA dimethylallyltransferase (Pseudomonas savastanoi pv. phaseolicola (strain 1448A / Race 6) (Pseudomonas syringae pv. phaseolicola (strain 1448A / Race 6))).